Reading from the N-terminus, the 81-residue chain is Cytochrome c oxidase subunit 7B2, mitochondrial (81 aa).

The transit peptide at 1–25 (MMFPLARNALSSLKIQSILQSMARH) directs the protein to the mitochondrion. Topologically, residues 26-33 (SHVKHSPD) are mitochondrial matrix. The helical transmembrane segment at 34-60 (FHDKYGNAVLASGTAFCVATWVFTATQ) threads the bilayer. At 61-81 (IGIEWNLSPVGRVTPKEWKHQ) the chain is on the mitochondrial intermembrane side.

This sequence belongs to the cytochrome c oxidase VIIb family. As to quaternary structure, component of the cytochrome c oxidase (complex IV, CIV), a multisubunit enzyme composed of 14 subunits. The complex is composed of a catalytic core of 3 subunits MT-CO1, MT-CO2 and MT-CO3, encoded in the mitochondrial DNA, and 11 supernumerary subunits COX4I, COX5A, COX5B, COX6A, COX6B, COX6C, COX7A, COX7B, COX7C, COX8 and NDUFA4, which are encoded in the nuclear genome. The complex exists as a monomer or a dimer and forms supercomplexes (SCs) in the inner mitochondrial membrane with NADH-ubiquinone oxidoreductase (complex I, CI) and ubiquinol-cytochrome c oxidoreductase (cytochrome b-c1 complex, complex III, CIII), resulting in different assemblies (supercomplex SCI(1)III(2)IV(1) and megacomplex MCI(2)III(2)IV(2)).

It is found in the mitochondrion inner membrane. Its pathway is energy metabolism; oxidative phosphorylation. Its function is as follows. Component of the cytochrome c oxidase, the last enzyme in the mitochondrial electron transport chain which drives oxidative phosphorylation. The respiratory chain contains 3 multisubunit complexes succinate dehydrogenase (complex II, CII), ubiquinol-cytochrome c oxidoreductase (cytochrome b-c1 complex, complex III, CIII) and cytochrome c oxidase (complex IV, CIV), that cooperate to transfer electrons derived from NADH and succinate to molecular oxygen, creating an electrochemical gradient over the inner membrane that drives transmembrane transport and the ATP synthase. Cytochrome c oxidase is the component of the respiratory chain that catalyzes the reduction of oxygen to water. Electrons originating from reduced cytochrome c in the intermembrane space (IMS) are transferred via the dinuclear copper A center (CU(A)) of subunit 2 and heme A of subunit 1 to the active site in subunit 1, a binuclear center (BNC) formed by heme A3 and copper B (CU(B)). The BNC reduces molecular oxygen to 2 water molecules using 4 electrons from cytochrome c in the IMS and 4 protons from the mitochondrial matrix. The polypeptide is Cytochrome c oxidase subunit 7B2, mitochondrial (COX7B2) (Homo sapiens (Human)).